Consider the following 208-residue polypeptide: Dephospho-CoA kinase (208 aa).

The DPCK domain occupies 11–207; sequence VIGLTGGIAS…EYYLELAQHD (197 aa). 19 to 24 lines the ATP pocket; it reads ASGKSA.

This sequence belongs to the CoaE family.

It is found in the cytoplasm. The enzyme catalyses 3'-dephospho-CoA + ATP = ADP + CoA + H(+). Its pathway is cofactor biosynthesis; coenzyme A biosynthesis; CoA from (R)-pantothenate: step 5/5. Catalyzes the phosphorylation of the 3'-hydroxyl group of dephosphocoenzyme A to form coenzyme A. The sequence is that of Dephospho-CoA kinase from Hahella chejuensis (strain KCTC 2396).